Reading from the N-terminus, the 173-residue chain is Adenine phosphoribosyltransferase (173 aa).

The protein belongs to the purine/pyrimidine phosphoribosyltransferase family. In terms of assembly, homodimer.

The protein localises to the cytoplasm. The enzyme catalyses AMP + diphosphate = 5-phospho-alpha-D-ribose 1-diphosphate + adenine. The protein operates within purine metabolism; AMP biosynthesis via salvage pathway; AMP from adenine: step 1/1. In terms of biological role, catalyzes a salvage reaction resulting in the formation of AMP, that is energically less costly than de novo synthesis. This is Adenine phosphoribosyltransferase from Thermoanaerobacter pseudethanolicus (strain ATCC 33223 / 39E) (Clostridium thermohydrosulfuricum).